Reading from the N-terminus, the 298-residue chain is ATP phosphoribosyltransferase (298 aa).

It belongs to the ATP phosphoribosyltransferase family. Long subfamily. The cofactor is Mg(2+).

The protein resides in the cytoplasm. The enzyme catalyses 1-(5-phospho-beta-D-ribosyl)-ATP + diphosphate = 5-phospho-alpha-D-ribose 1-diphosphate + ATP. It participates in amino-acid biosynthesis; L-histidine biosynthesis; L-histidine from 5-phospho-alpha-D-ribose 1-diphosphate: step 1/9. With respect to regulation, feedback inhibited by histidine. In terms of biological role, catalyzes the condensation of ATP and 5-phosphoribose 1-diphosphate to form N'-(5'-phosphoribosyl)-ATP (PR-ATP). Has a crucial role in the pathway because the rate of histidine biosynthesis seems to be controlled primarily by regulation of HisG enzymatic activity. The polypeptide is ATP phosphoribosyltransferase (hisG) (Photobacterium profundum (strain SS9)).